The following is a 341-amino-acid chain: MKNLVVFGTESHPKLTESICEHLCLDIGRVELSKFSNGETSVRIKQSVRGCDVYIVSPASGQVNDHLMELLIMISACKTASAKKVTAVLPVFPYSRQPDQKFSFSGAPLSDLQDAVVPCKKQTGYHPWIAQSGTLVADLLMCSGADHIITMDLHDPQFQGFFDIPVDNLFGRPLLKHYISLNIPNYHNAVIVSPDAGGAKRATAIADALGLDFALIHKNRRHEYGTSLMLVGDVQNKVAILIDDLIDTAYTLVRAAEFVKEHGASKIYALVTHCVLSGDAIERVKLSCIDKLIVTNTAPQTITPSGCFDIIDVAPTFAEAIRRIHNGESISILYDHNQVWV.

Residues Asp152, His154, and Asp167 each coordinate Mg(2+).

Belongs to the ribose-phosphate pyrophosphokinase family.

It localises to the cytoplasm. The enzyme catalyses D-ribose 5-phosphate + ATP = 5-phospho-alpha-D-ribose 1-diphosphate + AMP + H(+). Its pathway is metabolic intermediate biosynthesis; 5-phospho-alpha-D-ribose 1-diphosphate biosynthesis; 5-phospho-alpha-D-ribose 1-diphosphate from D-ribose 5-phosphate (route I): step 1/1. 5-phosphoribose 1-diphosphate synthase involved in nucleotide, histidine, and tryptophan biosynthesis. Active in heteromultimeric complexes with other 5-phosphoribose 1-diphosphate synthases. The protein is Ribose-phosphate pyrophosphokinase 5 of Schizosaccharomyces pombe (strain 972 / ATCC 24843) (Fission yeast).